Here is an 84-residue protein sequence, read N- to C-terminus: MADSDTSAPAKAKPAALRKGALVKVNRKAYSASIEAAASDPTPPDYIFDGPGELLVVKGDYGQVRWNRPVPDVWLRMDQLEVYS.

Belongs to the complex I NdhO subunit family. As to quaternary structure, NDH-1 can be composed of about 15 different subunits; different subcomplexes with different compositions have been identified which probably have different functions.

It is found in the cellular thylakoid membrane. The catalysed reaction is a plastoquinone + NADH + (n+1) H(+)(in) = a plastoquinol + NAD(+) + n H(+)(out). It carries out the reaction a plastoquinone + NADPH + (n+1) H(+)(in) = a plastoquinol + NADP(+) + n H(+)(out). Functionally, NDH-1 shuttles electrons from an unknown electron donor, via FMN and iron-sulfur (Fe-S) centers, to quinones in the respiratory and/or the photosynthetic chain. The immediate electron acceptor for the enzyme in this species is believed to be plastoquinone. Couples the redox reaction to proton translocation, and thus conserves the redox energy in a proton gradient. Cyanobacterial NDH-1 also plays a role in inorganic carbon-concentration. This chain is NAD(P)H-quinone oxidoreductase subunit O, found in Synechococcus sp. (strain CC9902).